Here is a 314-residue protein sequence, read N- to C-terminus: Ribosomal protein uL3 glutamine methyltransferase (314 aa).

It belongs to the protein N5-glutamine methyltransferase family. PrmB subfamily.

It carries out the reaction L-glutaminyl-[ribosomal protein uL3] + S-adenosyl-L-methionine = N(5)-methyl-L-glutaminyl-[ribosomal protein uL3] + S-adenosyl-L-homocysteine + H(+). In terms of biological role, methylates large ribosomal subunit protein uL3 on a specific glutamine residue. In Shewanella oneidensis (strain ATCC 700550 / JCM 31522 / CIP 106686 / LMG 19005 / NCIMB 14063 / MR-1), this protein is Ribosomal protein uL3 glutamine methyltransferase.